The primary structure comprises 365 residues: Putative clathrin assembly protein At4g40080 (365 aa).

Positions 29 to 167 (NTKSKTLSFH…STSRIMGFFI (139 aa)) constitute an ENTH domain.

It is found in the membrane. The protein resides in the clathrin-coated pit. Its subcellular location is the golgi apparatus. It localises to the cytoplasmic vesicle. The protein localises to the clathrin-coated vesicle. The sequence is that of Putative clathrin assembly protein At4g40080 from Arabidopsis thaliana (Mouse-ear cress).